The sequence spans 336 residues: Dual specificity mitogen-activated protein kinase kinase sek-1 (336 aa).

One can recognise a Protein kinase domain in the interval 50–311 (LVVLEELGKG…YPELLAMPFM (262 aa)). ATP is bound by residues 56–64 (LGKGGYGIV) and Lys79. Asp176 serves as the catalytic Proton acceptor. At Ser204 the chain carries Phosphoserine. Residue Thr208 is modified to Phosphothreonine.

The protein belongs to the protein kinase superfamily. STE Ser/Thr protein kinase family. MAP kinase kinase subfamily. In terms of assembly, interacts with nsy-1. Interacts with unc-16. The cofactor is Mg(2+). As to expression, expressed in linker cell in males.

It carries out the reaction L-seryl-[protein] + ATP = O-phospho-L-seryl-[protein] + ADP + H(+). The catalysed reaction is L-threonyl-[protein] + ATP = O-phospho-L-threonyl-[protein] + ADP + H(+). The enzyme catalyses L-tyrosyl-[protein] + ATP = O-phospho-L-tyrosyl-[protein] + ADP + H(+). With respect to regulation, activated by nsy-1-mediated phosphorylation. Functionally, dual specificity protein kinase which acts as an essential component of the p38 signal transduction pathway which is also composed of upstream effector nsy-1 and downstream effector pmk-1. May phosphorylate pmk-1. Downstream of CaMKII unc-43 and adapter protein tir-1, plays a role in determining asymmetric cell fates in olfactory AWC neurons during neuronal development. Activation results in the repression of odorant receptor str-2 expression in one of the 2 AWC neurons. Involved in resistance to pathogenic Gram-positive and Gram-negative bacterial and fungal infection. Involved in resistance to the nematotoxic C.cinerea galectin Cgl2. Probably by promoting pmk-1-mediated activation of skn-1, involved in the up-regulation of gcs-1 and glutathione-S-transferase gst-4 expression upon bacterial infection. Probably downstream of tir-1, required for the expression of antimicrobial peptide nlp-29 in the epidermis in response to fungal infection or physical injury. Regulates susceptibility of B.thuringiensis pore-forming toxin Cry5B and Cry21A. Involved in the response to oxidative stress. May regulate transcription factor daf-16 localization during oxidative stress. By phosphorylating pmk-1, regulates skn-1 localization during oxidative stress. By phosphorylating and activating pmk-1, plays a role in the stabilization of transcription factor rnt-1 in the intestine during oxidative stress. Up-regulates expression of gcs-1 in intestine upon arsenite treatment. Regulates germline proliferation in response to osmotic stress, starvation and germline apoptosis induced by heavy metals, such as Cu(2+). In association with mek-1, regulates germline cell apoptosis in response to oxidative, osmotic and heat shock stresses. Plays a role downstream of tir-1/nsy-1 in regulating susceptibility to anoxia. In males, by regulating pqn-41 expression, involved in non-apoptotic death of the linker cell which guides gonad elongation during larval development. Involved in egg laying. The sequence is that of Dual specificity mitogen-activated protein kinase kinase sek-1 from Caenorhabditis elegans.